Here is a 460-residue protein sequence, read N- to C-terminus: Adenosylhomocysteinase (460 aa).

Residues threonine 83, aspartate 158, and glutamate 184 each coordinate substrate. NAD(+) is bound at residue 185–187; that stretch reads TTT. Substrate contacts are provided by lysine 214 and aspartate 218. NAD(+)-binding positions include asparagine 219, 248-253, glutamate 271, 327-329, and asparagine 373; these read GYGDVG and IGH.

Belongs to the adenosylhomocysteinase family. The cofactor is NAD(+).

Its subcellular location is the cytoplasm. It catalyses the reaction S-adenosyl-L-homocysteine + H2O = L-homocysteine + adenosine. Its pathway is amino-acid biosynthesis; L-homocysteine biosynthesis; L-homocysteine from S-adenosyl-L-homocysteine: step 1/1. In terms of biological role, may play a key role in the regulation of the intracellular concentration of adenosylhomocysteine. In Bdellovibrio bacteriovorus (strain ATCC 15356 / DSM 50701 / NCIMB 9529 / HD100), this protein is Adenosylhomocysteinase.